The chain runs to 353 residues: MISHYIRFKIMTNILLSPEKSENDQELPIRPSYLQEFVGQQQIKENLSVFIKAAKSRNEHLDHTLFYGPPGLGKTTLAKIISNEIGGNFKSTSGPAILKVADLAAILTNLERNDVLFIDEIHRLNTAVEEVLYPAMEDFELDIIIGEGSAARSVKITLPKFTLIGATTRLGLLSNPLRDRFGIPMRLNFYNTEELKKVLNRASKLLDIDLTDSGSEEIAKRSRGTPRIALRLLRRIRDFAAVDGKSRVDKEISDFGLNRLEVDRIGLDSNDYRYLKFIADNYNGGPVGIETIAAALSEQRDALEETIEPYLIQIGLLQRTPRGRVITIAAFEHLKMPVPNQSHHQFNIFNEHE.

The tract at residues 4 to 190 (HYIRFKIMTN…FGIPMRLNFY (187 aa)) is large ATPase domain (RuvB-L). Residues Ile29, Arg30, Gly71, Lys74, Thr75, Thr76, 137 to 139 (EDF), Arg180, Tyr190, and Arg227 each bind ATP. Thr75 is a binding site for Mg(2+). The segment at 191-261 (NTEELKKVLN…ISDFGLNRLE (71 aa)) is small ATPAse domain (RuvB-S). The segment at 264 to 353 (RIGLDSNDYR…HQFNIFNEHE (90 aa)) is head domain (RuvB-H). DNA is bound by residues Arg300, Arg319, and Arg324.

The protein belongs to the RuvB family. In terms of assembly, homohexamer. Forms an RuvA(8)-RuvB(12)-Holliday junction (HJ) complex. HJ DNA is sandwiched between 2 RuvA tetramers; dsDNA enters through RuvA and exits via RuvB. An RuvB hexamer assembles on each DNA strand where it exits the tetramer. Each RuvB hexamer is contacted by two RuvA subunits (via domain III) on 2 adjacent RuvB subunits; this complex drives branch migration. In the full resolvosome a probable DNA-RuvA(4)-RuvB(12)-RuvC(2) complex forms which resolves the HJ.

The protein resides in the cytoplasm. The catalysed reaction is ATP + H2O = ADP + phosphate + H(+). Its function is as follows. The RuvA-RuvB-RuvC complex processes Holliday junction (HJ) DNA during genetic recombination and DNA repair, while the RuvA-RuvB complex plays an important role in the rescue of blocked DNA replication forks via replication fork reversal (RFR). RuvA specifically binds to HJ cruciform DNA, conferring on it an open structure. The RuvB hexamer acts as an ATP-dependent pump, pulling dsDNA into and through the RuvAB complex. RuvB forms 2 homohexamers on either side of HJ DNA bound by 1 or 2 RuvA tetramers; 4 subunits per hexamer contact DNA at a time. Coordinated motions by a converter formed by DNA-disengaged RuvB subunits stimulates ATP hydrolysis and nucleotide exchange. Immobilization of the converter enables RuvB to convert the ATP-contained energy into a lever motion, pulling 2 nucleotides of DNA out of the RuvA tetramer per ATP hydrolyzed, thus driving DNA branch migration. The RuvB motors rotate together with the DNA substrate, which together with the progressing nucleotide cycle form the mechanistic basis for DNA recombination by continuous HJ branch migration. Branch migration allows RuvC to scan DNA until it finds its consensus sequence, where it cleaves and resolves cruciform DNA. This Rickettsia massiliae (strain Mtu5) protein is Holliday junction branch migration complex subunit RuvB.